Consider the following 308-residue polypeptide: tRNA dimethylallyltransferase (308 aa).

Position 17–24 (17–24 (GPTGSGKS)) interacts with ATP. Substrate is bound at residue 19 to 24 (TGSGKS).

Belongs to the IPP transferase family. In terms of assembly, monomer. The cofactor is Mg(2+).

It catalyses the reaction adenosine(37) in tRNA + dimethylallyl diphosphate = N(6)-dimethylallyladenosine(37) in tRNA + diphosphate. Catalyzes the transfer of a dimethylallyl group onto the adenine at position 37 in tRNAs that read codons beginning with uridine, leading to the formation of N6-(dimethylallyl)adenosine (i(6)A). The protein is tRNA dimethylallyltransferase of Paenarthrobacter aurescens (strain TC1).